The primary structure comprises 221 residues: Histone H1C (221 aa).

2 disordered regions span residues Met1 to Ser43 and Ala113 to Ala221. The H15 domain maps to Thr38–Ala112. Basic residues-rich tracts occupy residues Lys141 to Lys167 and Ala175 to Ala221.

It belongs to the histone H1/H5 family.

It is found in the nucleus. Its subcellular location is the chromosome. Functionally, histones H1 are necessary for the condensation of nucleosome chains into higher-order structures. The chain is Histone H1C from Chironomus tentans (Midge).